Consider the following 118-residue polypeptide: V-type proton ATPase subunit F (118 aa).

Belongs to the V-ATPase F subunit family. V-ATPase is a heteromultimeric enzyme composed of a peripheral catalytic V1 complex (components A to H) attached to an integral membrane V0 proton pore complex (components: a, c, c', c'', d, e, f and VOA1).

It localises to the vacuole membrane. In terms of biological role, subunit of the V1 complex of vacuolar(H+)-ATPase (V-ATPase), a multisubunit enzyme composed of a peripheral complex (V1) that hydrolyzes ATP and a membrane integral complex (V0) that translocates protons. V-ATPase is responsible for acidifying and maintaining the pH of intracellular compartments. This chain is V-type proton ATPase subunit F, found in Saccharomyces cerevisiae (strain ATCC 204508 / S288c) (Baker's yeast).